Here is a 101-residue protein sequence, read N- to C-terminus: uncharacterized protein (101 aa).

This is an uncharacterized protein from Encephalitozoon cuniculi (strain GB-M1) (Microsporidian parasite).